A 794-amino-acid polypeptide reads, in one-letter code: Phenylalanine--tRNA ligase beta subunit (794 aa).

One can recognise a tRNA-binding domain in the interval 40–158; sequence NSLNSELVLG…LKKYLGKDVK (119 aa). Residues 402–477 enclose the B5 domain; that stretch reads KNKTEFEIKI…RLYSYDNIQE (76 aa). Residues D455, D461, E464, and E465 each contribute to the Mg(2+) site. One can recognise an FDX-ACB domain in the interval 702–794; sequence SKFQSSSRDL…NVKKMKVVIR (93 aa).

It belongs to the phenylalanyl-tRNA synthetase beta subunit family. Type 1 subfamily. As to quaternary structure, tetramer of two alpha and two beta subunits. Requires Mg(2+) as cofactor.

The protein resides in the cytoplasm. It carries out the reaction tRNA(Phe) + L-phenylalanine + ATP = L-phenylalanyl-tRNA(Phe) + AMP + diphosphate + H(+). This Mycoplasma capricolum subsp. capricolum (strain California kid / ATCC 27343 / NCTC 10154) protein is Phenylalanine--tRNA ligase beta subunit.